The chain runs to 156 residues: Large ribosomal subunit protein eL24 (156 aa).

The segment at Leu87 to Arg156 is disordered. Positions Leu89–Lys129 are enriched in basic and acidic residues. Residues Ser130–Ala147 are compositionally biased toward low complexity.

It belongs to the eukaryotic ribosomal protein eL24 family.

In Debaryomyces hansenii (strain ATCC 36239 / CBS 767 / BCRC 21394 / JCM 1990 / NBRC 0083 / IGC 2968) (Yeast), this protein is Large ribosomal subunit protein eL24 (RPL24).